A 310-amino-acid polypeptide reads, in one-letter code: Aspartate carbamoyltransferase catalytic subunit 3 (310 aa).

Residues arginine 55 and threonine 56 each coordinate carbamoyl phosphate. Residue lysine 85 participates in L-aspartate binding. The carbamoyl phosphate site is built by arginine 106, histidine 134, and glutamine 137. L-aspartate-binding residues include arginine 167 and arginine 228. Residues leucine 266 and proline 267 each coordinate carbamoyl phosphate.

The protein belongs to the aspartate/ornithine carbamoyltransferase superfamily. ATCase family. As to quaternary structure, heterododecamer (2C3:3R2) of six catalytic PyrB chains organized as two trimers (C3), and six regulatory PyrI chains organized as three dimers (R2).

It catalyses the reaction carbamoyl phosphate + L-aspartate = N-carbamoyl-L-aspartate + phosphate + H(+). It functions in the pathway pyrimidine metabolism; UMP biosynthesis via de novo pathway; (S)-dihydroorotate from bicarbonate: step 2/3. In terms of biological role, catalyzes the condensation of carbamoyl phosphate and aspartate to form carbamoyl aspartate and inorganic phosphate, the committed step in the de novo pyrimidine nucleotide biosynthesis pathway. The chain is Aspartate carbamoyltransferase catalytic subunit 3 from Shewanella halifaxensis (strain HAW-EB4).